The sequence spans 218 residues: uncharacterized protein (218 aa).

This sequence belongs to the mimivirus L6/L7/L57 family.

This is an uncharacterized protein from Acanthamoeba polyphaga mimivirus (APMV).